A 364-amino-acid polypeptide reads, in one-letter code: Fructose-bisphosphate aldolase B (364 aa).

Position 2 is an N-acetylalanine (alanine 2). Lysine 13 bears the N6-succinyllysine mark. Residue serine 36 is modified to Phosphoserine. Threonine 39 bears the Phosphothreonine mark. Arginine 43 is a beta-D-fructose 1,6-bisphosphate binding site. Position 119 is a phosphothreonine (threonine 119). Lysine 121 carries the post-translational modification N6-succinyllysine. Serine 132 is subject to Phosphoserine. Glutamate 188 acts as the Proton acceptor in catalysis. Lysine 230 (schiff-base intermediate with dihydroxyacetone-P) is an active-site residue. Serine 272, serine 276, serine 299, and serine 301 each carry phosphoserine. 272 to 274 serves as a coordination point for beta-D-fructose 1,6-bisphosphate; sequence SGG. A beta-D-fructose 1,6-bisphosphate-binding site is contributed by arginine 304. Serine 309 is modified (phosphoserine). Lysine 317 bears the N6-succinyllysine mark.

This sequence belongs to the class I fructose-bisphosphate aldolase family. As to quaternary structure, homotetramer. Interacts with BBS1, BBS2, BBS4 and BBS7. Forms a ternary complex with G6PD and TP53; this interaction is direct.

The protein localises to the cytoplasm. Its subcellular location is the cytosol. It is found in the cytoskeleton. It localises to the microtubule organizing center. The protein resides in the centrosome. The protein localises to the centriolar satellite. It catalyses the reaction beta-D-fructose 1,6-bisphosphate = D-glyceraldehyde 3-phosphate + dihydroxyacetone phosphate. The enzyme catalyses beta-D-fructose 1-phosphate = D-glyceraldehyde + dihydroxyacetone phosphate. It functions in the pathway carbohydrate degradation; glycolysis; D-glyceraldehyde 3-phosphate and glycerone phosphate from D-glucose: step 4/4. It participates in carbohydrate biosynthesis; gluconeogenesis. Its pathway is carbohydrate metabolism; fructose metabolism. Its function is as follows. Catalyzes the aldol cleavage of fructose 1,6-biphosphate to form two triosephosphates dihydroxyacetone phosphate and D-glyceraldehyde 3-phosphate in glycolysis as well as the reverse stereospecific aldol addition reaction in gluconeogenesis. In fructolysis, metabolizes fructose 1-phosphate derived from the phosphorylation of dietary fructose by fructokinase into dihydroxyacetone phosphate and D-glyceraldehyde. Acts as an adapter independently of its enzymatic activity, exerts a tumor suppressor role by stabilizing the ternary complex with G6PD and TP53 to inhibit G6PD activity and keep oxidative pentose phosphate metabolism in check. The sequence is that of Fructose-bisphosphate aldolase B (ALDOB) from Bos taurus (Bovine).